Reading from the N-terminus, the 181-residue chain is Adenylyl-sulfate kinase (181 aa).

An ATP-binding site is contributed by 13–20 (GVSGAGKS). Serine 87 acts as the Phosphoserine intermediate in catalysis.

The protein belongs to the APS kinase family.

It catalyses the reaction adenosine 5'-phosphosulfate + ATP = 3'-phosphoadenylyl sulfate + ADP + H(+). It participates in sulfur metabolism; hydrogen sulfide biosynthesis; sulfite from sulfate: step 2/3. Catalyzes the synthesis of activated sulfate. This is Adenylyl-sulfate kinase from Burkholderia ambifaria (strain ATCC BAA-244 / DSM 16087 / CCUG 44356 / LMG 19182 / AMMD) (Burkholderia cepacia (strain AMMD)).